Here is a 2266-residue protein sequence, read N- to C-terminus: Little elongation complex subunit 1 (2266 aa).

Residues 23-186 are a coiled coil; it reads CASLQQNLNE…KQKNEKELRH (164 aa). 2 disordered regions span residues 223–259 and 517–540; these read GEGSRCVPEKPAKAITSSRVPGEDGTLPPTQGSPLRT and PAQEKEAAPGKSELCSSPLGKRPL. The segment covering 250 to 259 has biased composition (polar residues); the sequence is PPTQGSPLRT. Ser255, Ser533, Ser558, and Ser589 each carry phosphoserine. Residues 591–623 are disordered; sequence ELEKEKEDTQGFTLGESPESEDDDSGDGMDVAG. A compositionally biased stretch (acidic residues) spans 608-617; the sequence is PESEDDDSGD. At Ser707 the chain carries Phosphoserine. Thr832 carries the phosphothreonine modification. Position 925 is a phosphoserine (Ser925). Positions 925–955 are disordered; sequence SPEVSASRRKLDFNSPGGSSPVENSDCSTNS. Over residues 940-955 the composition is skewed to polar residues; the sequence is PGGSSPVENSDCSTNS. The residue at position 958 (Ser958) is a Phosphoserine. Disordered regions lie at residues 977 to 1001 and 1107 to 1133; these read VQGDGQKQRQPQATDLDSSGTHGSE and TEVESEAFSCSEGSEQQDAPDDSQKNL. The span at 984–998 shows a compositional bias: polar residues; the sequence is QRQPQATDLDSSGTH. The residue at position 1218 (Lys1218) is an N6-acetyllysine. Disordered regions lie at residues 1295-1372, 1467-1510, and 1543-1707; these read TTEN…PSAL, AEKS…KSRL, and NSKL…SASE. Composition is skewed to polar residues over residues 1306 to 1319, 1328 to 1344, 1487 to 1505, 1565 to 1588, and 1594 to 1605; these read RETTGSSSHASEPT, EGSSPISGMPQNENPQS, NNLSCPQEDVSSSGQSTNF, NKPVKTSASSRVETHQSEVAQSFS, and TKTQRSQTQTIL. Residue Ser1588 is modified to Phosphoserine. 2 stretches are compositionally biased toward low complexity: residues 1609–1620 and 1637–1671; these read DTSTPTDCSPDT and APLIATPPRTSQPLSPLISSSSPSSPASPVGQVSP. Phosphoserine is present on Ser1617. Residue Thr1642 is modified to Phosphothreonine. Residues Ser1692, Ser1697, Ser1699, Ser1701, Ser1712, Ser1838, and Ser1854 each carry the phosphoserine modification. The interval 1809-1902 is disordered; that stretch reads TGSSSGGDCN…AVSAVSQLPL (94 aa). The span at 1825–1843 shows a compositional bias: polar residues; the sequence is LGTQQDSSGKRTLSTSTLR. The segment covering 1889–1901 has biased composition (polar residues); the sequence is CSSPAVSAVSQLP. At Ser1903 the chain carries Phosphoserine.

The protein belongs to the ICE1 family. Component of the little elongation complex (LEC), at least composed of ELL (ELL, ELL2 or ELL3), ZC3H8, ICE1 and ICE2. Interacts (via N-terminus domain) with ELL. Interacts (via C-terminus domain) with ICE2 and ZC3H8.

The protein localises to the nucleus. It localises to the cajal body. Functionally, component of the little elongation complex (LEC), a complex required to regulate small nuclear RNA (snRNA) gene transcription by RNA polymerase II and III. Specifically acts as a scaffold protein that promotes the LEC complex formation and recruitment and RNA polymerase II occupancy at snRNA genes in subnuclear bodies. The polypeptide is Little elongation complex subunit 1 (ICE1) (Homo sapiens (Human)).